A 189-amino-acid chain; its full sequence is Phosphoheptose isomerase (189 aa).

One can recognise an SIS domain in the interval 34–189 (LVEAFRKGNK…CDLVEKALFA (156 aa)). 49 to 51 (NGG) contacts substrate. The Zn(2+) site is built by H58 and E62. Residues E62, 91-92 (ND), 117-119 (STS), S122, and Q169 each bind substrate. The Zn(2+) site is built by Q169 and H177.

This sequence belongs to the SIS family. GmhA subfamily. In terms of assembly, homotetramer. Requires Zn(2+) as cofactor.

The protein localises to the cytoplasm. The catalysed reaction is 2 D-sedoheptulose 7-phosphate = D-glycero-alpha-D-manno-heptose 7-phosphate + D-glycero-beta-D-manno-heptose 7-phosphate. It participates in carbohydrate biosynthesis; D-glycero-D-manno-heptose 7-phosphate biosynthesis; D-glycero-alpha-D-manno-heptose 7-phosphate and D-glycero-beta-D-manno-heptose 7-phosphate from sedoheptulose 7-phosphate: step 1/1. In terms of biological role, catalyzes the isomerization of sedoheptulose 7-phosphate in D-glycero-D-manno-heptose 7-phosphate. The sequence is that of Phosphoheptose isomerase from Pelobacter propionicus (strain DSM 2379 / NBRC 103807 / OttBd1).